The chain runs to 213 residues: Pyridoxine/pyridoxamine 5'-phosphate oxidase (213 aa).

Substrate-binding positions include 8-11 (RKNY) and lysine 66. Residues 61–66 (RIVLIK), 76–77 (FT), arginine 82, lysine 83, and glutamine 105 each bind FMN. 3 residues coordinate substrate: tyrosine 123, arginine 127, and serine 131. FMN contacts are provided by residues 140–141 (QS) and tryptophan 184. 190–192 (RLH) contacts substrate. Arginine 194 serves as a coordination point for FMN.

The protein belongs to the pyridoxamine 5'-phosphate oxidase family. In terms of assembly, homodimer. FMN is required as a cofactor.

It catalyses the reaction pyridoxamine 5'-phosphate + O2 + H2O = pyridoxal 5'-phosphate + H2O2 + NH4(+). The enzyme catalyses pyridoxine 5'-phosphate + O2 = pyridoxal 5'-phosphate + H2O2. It participates in cofactor metabolism; pyridoxal 5'-phosphate salvage; pyridoxal 5'-phosphate from pyridoxamine 5'-phosphate: step 1/1. The protein operates within cofactor metabolism; pyridoxal 5'-phosphate salvage; pyridoxal 5'-phosphate from pyridoxine 5'-phosphate: step 1/1. Its function is as follows. Catalyzes the oxidation of either pyridoxine 5'-phosphate (PNP) or pyridoxamine 5'-phosphate (PMP) into pyridoxal 5'-phosphate (PLP). This Paraburkholderia phytofirmans (strain DSM 17436 / LMG 22146 / PsJN) (Burkholderia phytofirmans) protein is Pyridoxine/pyridoxamine 5'-phosphate oxidase.